Consider the following 785-residue polypeptide: Endonuclease MutS2 (785 aa).

An ATP-binding site is contributed by 335 to 342 (GPNTGGKT). Positions 710-785 (LDLRGERYED…GNGVTIVEFK (76 aa)) constitute a Smr domain.

The protein belongs to the DNA mismatch repair MutS family. MutS2 subfamily. As to quaternary structure, homodimer. Binds to stalled ribosomes, contacting rRNA.

Endonuclease that is involved in the suppression of homologous recombination and thus may have a key role in the control of bacterial genetic diversity. Its function is as follows. Acts as a ribosome collision sensor, splitting the ribosome into its 2 subunits. Detects stalled/collided 70S ribosomes which it binds and splits by an ATP-hydrolysis driven conformational change. Acts upstream of the ribosome quality control system (RQC), a ribosome-associated complex that mediates the extraction of incompletely synthesized nascent chains from stalled ribosomes and their subsequent degradation. Probably generates substrates for RQC. The protein is Endonuclease MutS2 of Listeria monocytogenes serotype 4b (strain CLIP80459).